A 321-amino-acid chain; its full sequence is Aspartate carbamoyltransferase catalytic subunit (321 aa).

Carbamoyl phosphate is bound by residues R65 and T66. K93 contacts L-aspartate. Residues R115, H143, and Q146 each coordinate carbamoyl phosphate. L-aspartate is bound by residues R176 and R230. Carbamoyl phosphate contacts are provided by G271 and P272.

This sequence belongs to the aspartate/ornithine carbamoyltransferase superfamily. ATCase family. In terms of assembly, heterododecamer (2C3:3R2) of six catalytic PyrB chains organized as two trimers (C3), and six regulatory PyrI chains organized as three dimers (R2).

The catalysed reaction is carbamoyl phosphate + L-aspartate = N-carbamoyl-L-aspartate + phosphate + H(+). The protein operates within pyrimidine metabolism; UMP biosynthesis via de novo pathway; (S)-dihydroorotate from bicarbonate: step 2/3. Functionally, catalyzes the condensation of carbamoyl phosphate and aspartate to form carbamoyl aspartate and inorganic phosphate, the committed step in the de novo pyrimidine nucleotide biosynthesis pathway. The polypeptide is Aspartate carbamoyltransferase catalytic subunit (Bartonella tribocorum (strain CIP 105476 / IBS 506)).